A 1173-amino-acid polypeptide reads, in one-letter code: WASH complex subunit 4 (1173 aa).

A2 is subject to N-acetylalanine. S7 carries the phosphoserine modification. Residues 27–56 (QLKNYGRFLEEYTSQLRRIEDALDDLIGDV) are a coiled coil. The interval 705–1173 (KDLALFFSLN…STVSADPVVK (469 aa)) is sufficient for interaction with WASHC5. Residues 1141–1155 (AEENQEKKEKEEETK) are compositionally biased toward basic and acidic residues. The disordered stretch occupies residues 1141 to 1173 (AEENQEKKEKEEETKTSNGDGPESTVSADPVVK). Position 1154 is a phosphothreonine (T1154).

Belongs to the SWIP family. Component of the WASH core complex also described as WASH regulatory complex (SHRC) composed of WASH (WASHC1, WASH2P or WASH3P), WASHC2 (WASHC2A or WASHC2C), WASHC3, WASHC4 and WASHC5. The WASH core complex associates via WASHC2 with the F-actin-capping protein dimer (formed by CAPZA1, CAPZA2 or CAPZA3 and CAPZB) in a transient or substoichiometric manner which was initially described as WASH complex.

It localises to the early endosome. Its function is as follows. Acts as a component of the WASH core complex that functions as a nucleation-promoting factor (NPF) at the surface of endosomes, where it recruits and activates the Arp2/3 complex to induce actin polymerization, playing a key role in the fission of tubules that serve as transport intermediates during endosome sorting. The sequence is that of WASH complex subunit 4 from Mus musculus (Mouse).